We begin with the raw amino-acid sequence, 338 residues long: N-acetyl-gamma-glutamyl-phosphate reductase (338 aa).

C148 is a catalytic residue.

It belongs to the NAGSA dehydrogenase family. Type 1 subfamily.

The protein resides in the cytoplasm. It carries out the reaction N-acetyl-L-glutamate 5-semialdehyde + phosphate + NADP(+) = N-acetyl-L-glutamyl 5-phosphate + NADPH + H(+). It functions in the pathway amino-acid biosynthesis; L-arginine biosynthesis; N(2)-acetyl-L-ornithine from L-glutamate: step 3/4. Its function is as follows. Catalyzes the NADPH-dependent reduction of N-acetyl-5-glutamyl phosphate to yield N-acetyl-L-glutamate 5-semialdehyde. The polypeptide is N-acetyl-gamma-glutamyl-phosphate reductase (Leptospira interrogans serogroup Icterohaemorrhagiae serovar Lai (strain 56601)).